Reading from the N-terminus, the 495-residue chain is Cysteine--tRNA ligase (495 aa).

Cys29 contributes to the Zn(2+) binding site. The short motif at 31 to 41 (VTVYDDSHVGH) is the 'HIGH' region element. Residues Cys209, His234, and Glu238 each contribute to the Zn(2+) site. Positions 266–270 (KMSKS) match the 'KMSKS' region motif. Lys269 is an ATP binding site.

The protein belongs to the class-I aminoacyl-tRNA synthetase family. In terms of assembly, monomer. Zn(2+) serves as cofactor.

The protein resides in the cytoplasm. It catalyses the reaction tRNA(Cys) + L-cysteine + ATP = L-cysteinyl-tRNA(Cys) + AMP + diphosphate. This chain is Cysteine--tRNA ligase (cysS), found in Aquifex aeolicus (strain VF5).